A 396-amino-acid polypeptide reads, in one-letter code: Ribosomal RNA large subunit methyltransferase I (396 aa).

The region spanning 2–81 is the PUA domain; sequence TVRLILAKGR…EVIDCAFFIR (80 aa).

Belongs to the methyltransferase superfamily. RlmI family.

The protein localises to the cytoplasm. The enzyme catalyses cytidine(1962) in 23S rRNA + S-adenosyl-L-methionine = 5-methylcytidine(1962) in 23S rRNA + S-adenosyl-L-homocysteine + H(+). In terms of biological role, specifically methylates the cytosine at position 1962 (m5C1962) of 23S rRNA. This chain is Ribosomal RNA large subunit methyltransferase I, found in Yersinia pseudotuberculosis serotype O:1b (strain IP 31758).